The chain runs to 157 residues: Protein-export protein SecB (157 aa).

This sequence belongs to the SecB family. Homotetramer, a dimer of dimers. One homotetramer interacts with 1 SecA dimer.

The protein resides in the cytoplasm. Functionally, one of the proteins required for the normal export of preproteins out of the cell cytoplasm. It is a molecular chaperone that binds to a subset of precursor proteins, maintaining them in a translocation-competent state. It also specifically binds to its receptor SecA. This Photobacterium profundum (strain SS9) protein is Protein-export protein SecB.